Reading from the N-terminus, the 146-residue chain is ATP synthase F(0) complex subunit C2, mitochondrial (146 aa).

A mitochondrion-targeting transit peptide spans 1 to 71; the sequence is MYACSKFVST…RSFQTSAISR (71 aa). The chain crosses the membrane as a helical span at residues 87–107; sequence VGVAGSGAGIGTVFGSLIIGY. Lys114 is subject to N6,N6,N6-trimethyllysine. Residues 122–142 traverse the membrane as a helical segment; it reads ILGFALSEAMGLFCLMVAFLI.

It belongs to the ATPase C chain family. F-type ATPases have 2 components, CF(1) - the catalytic core - and CF(0) - the membrane proton channel. CF(1) has five subunits: alpha(3), beta(3), gamma(1), delta(1), epsilon(1). CF(0) has three main subunits: a, b and c. Interacts with DNAJC30; interaction is direct. Post-translationally, trimethylated by ATPSCKMT at Lys-114. Methylation is required for proper incorporation of the C subunit into the ATP synthase complex and mitochondrial respiration.

The protein localises to the mitochondrion membrane. Mitochondrial membrane ATP synthase (F(1)F(0) ATP synthase or Complex V) produces ATP from ADP in the presence of a proton gradient across the membrane which is generated by electron transport complexes of the respiratory chain. F-type ATPases consist of two structural domains, F(1) - containing the extramembraneous catalytic core and F(0) - containing the membrane proton channel, linked together by a central stalk and a peripheral stalk. During catalysis, ATP synthesis in the catalytic domain of F(1) is coupled via a rotary mechanism of the central stalk subunits to proton translocation. Part of the complex F(0) domain. A homomeric c-ring of probably 10 subunits is part of the complex rotary element. This is ATP synthase F(0) complex subunit C2, mitochondrial from Mus musculus (Mouse).